Here is a 68-residue protein sequence, read N- to C-terminus: Protein ShdD (68 aa).

Involved in the non-oxidative decarboxylation and detoxification of phenolic derivatives under anaerobic conditions, however the precise biochemical function of ShdD in metabolism of phenolic acid is unknown. The chain is Protein ShdD from Sedimentibacter hydroxybenzoicus (Clostridium hydroxybenzoicum).